Here is a 78-residue protein sequence, read N- to C-terminus: Large ribosomal subunit protein uL24 (78 aa).

The protein belongs to the universal ribosomal protein uL24 family. As to quaternary structure, part of the 50S ribosomal subunit.

Functionally, one of two assembly initiator proteins, it binds directly to the 5'-end of the 23S rRNA, where it nucleates assembly of the 50S subunit. One of the proteins that surrounds the polypeptide exit tunnel on the outside of the subunit. The protein is Large ribosomal subunit protein uL24 of Helicobacter hepaticus (strain ATCC 51449 / 3B1).